A 1832-amino-acid polypeptide reads, in one-letter code: MELMFAEWEDGERFSFEDSDRFEEDSLCSFISEAESLCQNWRGWRKQSAGPNSPTGGGGGGGSGGTRTRDGLVIPLVELSAKQVAFHIPFEVVEKVYPPVPEQLQLRIAFWSFPENEEDIRLYSCLANGSADEFQRGDQLFRMRAVKDPLQIGFHLSATVVPPQMVPPKGAYNVAVMFDRCRVTSCSCTCGAGAKWCTHVVALCLFRIHNASAVCLRAPVSESLSRLQRDQLQKFAQYLISELPQQILPTAQRLLDELLSSQSTAINTVCGAPDPTAGPSASDQSTWYLDESTLTDNIKKTLHKFCGPSPVVFSDVNSMYLSSTEPPAAAEWACLLRPLRGREPEGVWNLLSIVREMFKRRDSNAAPLLEILTDQCLTYEQITGWWYSVRTSASHSSASGHTGRSNGQSEVAAHACASMCDEMVTLWRLAVLDPALSPQRRRELCAQLRQWQLKVIENVKRGQHKKTLERLFPGFRPAVEACYFNWEEAYPLPGVTYSGTDRKLALCWARALPARPGASRSGGLEESRPRPLPTEPAVRPKEPGAKRKGLGEGISSQRGPRRLSAEGGDKALHKMGPSGGKAKVLGGTGSGGKSSAGSGSKRRLSSEDSSLEPDLAEMSLDDSSLALGAEASTFGGFPESPPPCPSSVGSRGPSTFLPEPPDTYEEDAGVYFSEGPEPPTASADHPGLLPGEVCTRDDLPSTDDSGSGLHKTKEAAPAVGEEDDDYQAYYLNAQDGAGGEEEKAEGGTGEEHDLFAGLKPLEQESRMEVLFACAEALHAHGYSNEASRLTVELAQDLLANPPDLKVEPPPAKGKKNKVSTSRQTWVATNTLTKAAFLLTVLSERPEHHSLAFRVGMFALELQRPPASTKALEVKLAYQESEVAALLKKIPRGPSEMSTIRCRAEELREGTLCDYRPVLPLMLASFIFDVLCAPVVSLTGSRPPSRNWTNEMPGDEELGFEAAVAALGMKTTVSEAEHPLLCEGTRREKGDLALALMITYKDDQAKLKKILDKLLDRESQTHKPQTLSSFYSSSRPATANQRSPSKHGAPSAPGALQPLTSSSAGPAQPGNVAGAGPGPTEGFTEKNVPESSPHSPCEGLPPEAALTPRPEGKVPSRLALGSRGGYNGRGWGSPGRPKKKHTGMASIDSSAPETTSDSSPTLSRRPLRGGWAPTSWGRGQDSDSISSSSSDSLGSSSSSGSRRASASGGARAKTVDVGRCYKGRRPESHAPHVPNQPSEAAAHFYFELAKTVLIKAGGNSSTSIFTHPSSSGGHQGPHRNLHLCAFEIGLYALGLHNFVSPNWLSRTYSSHVSWITGQAMEIGSAALTILVECWDGHLTPPEVASLADRASRARDSNMVRAAAELALSCLPHAHALNPNEIQRALVQCKEQDNLMLEKACMAVEEAAKGGGVYPEVLFEVAHQWFWLYEETAGGSSTAREGATSCSGSGMRAAGEAGRGLPEGRGAPGTEPVTVAAAAVTAAATVVPVISVGSSLYPGPGLGHGHSPGLHPYTALQPHLPCSPQYLTHPAHPAHPMPHMPRPAVFPVPSSAYPQGVHPAFLGAQYPYSVTPPSLAATAVSFPVPSMAPITVHPYHTEPGLPLPTSVALSSVHPASTFPAIQGASLPALTTQPSPLVSGGFPPPEEETHSQPVNPHSLHHLHAAYRVGMLALEMLGRRAHNDHPNNFSRSPPYTDDVKWLLGLAAKLGVNYVHQFCVGAAKGVLSPFVLQEIVMETLQRLNPIHAHNHLRAPAFHQLVQRCQQAYMQYIHHRLIHLTPADYDDFVNAIRSARSAFCLTPMGMMQFNDILQNLKRSKQTKELWQRVSLEITTFSP.

Phosphoserine is present on residues Ser36, Ser48, and Ser53. The tract at residues 45-67 is disordered; the sequence is RKQSAGPNSPTGGGGGGGSGGTR. Over residues 55 to 65 the composition is skewed to gly residues; the sequence is TGGGGGGGSGG. The SWIM-type zinc-finger motif lies at 172 to 208; that stretch reads YNVAVMFDRCRVTSCSCTCGAGAKWCTHVVALCLFRI. Phosphoserine is present on residues Ser437 and Ser564. 3 disordered regions span residues 516–722, 800–821, and 1018–1216; these read PGAS…VGEE, NPPDLKVEPPPAKGKKNKVSTS, and SQTH…TVDV. Residues 563–572 show a composition bias toward basic and acidic residues; the sequence is LSAEGGDKAL. Over residues 1021-1042 the composition is skewed to polar residues; that stretch reads HKPQTLSSFYSSSRPATANQRS. Residues 1121 to 1132 show a composition bias toward gly residues; that stretch reads SRGGYNGRGWGS. At Thr1141 the chain carries Phosphothreonine. A compositionally biased stretch (polar residues) spans 1146–1161; that stretch reads IDSSAPETTSDSSPTL. A phosphoserine mark is found at Ser1155, Ser1158, and Ser1162. Residues 1176-1211 show a composition bias toward low complexity; sequence GRGQDSDSISSSSSDSLGSSSSSGSRRASASGGARA. Ser1270 is subject to Phosphoserine. Residues 1435–1446 show a composition bias toward polar residues; it reads STAREGATSCSG. The segment at 1435–1465 is disordered; that stretch reads STAREGATSCSGSGMRAAGEAGRGLPEGRGA. Over residues 1455–1465 the composition is skewed to gly residues; sequence AGRGLPEGRGA. Residue Ser1831 is modified to Phosphoserine.

This sequence belongs to the ZSWIM8 family. Component of the SCF-like E3 ubiquitin-protein ligase complex which contains CUL3, RBX1, ELOB, ELOC and ZSWIM8. Interacts with DAB1.

The protein localises to the cytoplasm. The protein resides in the cytosol. It functions in the pathway protein modification; protein ubiquitination. Its function is as follows. Substrate recognition component of a SCF-like E3 ubiquitin-protein ligase complex that promotes target-directed microRNA degradation (TDMD), a process that mediates degradation of microRNAs (miRNAs). The SCF-like E3 ubiquitin-protein ligase complex acts by catalyzing ubiquitination and subsequent degradation of AGO proteins (AGO1, AGO2, AGO3 and/or AGO4), thereby exposing miRNAs for degradation. Specifically recognizes and binds AGO proteins when they are engaged with a TDMD target. May also acts as a regulator of axon guidance: specifically recognizes misfolded ROBO3 and promotes its ubiquitination and subsequent degradation. Plays an essential role for proper embryonic development of heart and lung. Controls protein quality of DAB1, a key signal molecule for brain development, thus protecting its signaling strength. Mechanistically, recognizes intrinsically disordered regions of DAB1 and eliminates misfolded DAB1 that cannot be properly phosphorylated. The protein is Zinc finger SWIM domain-containing protein 8 of Mus musculus (Mouse).